We begin with the raw amino-acid sequence, 294 residues long: Transcription factor nsy-7 (294 aa).

Disordered stretches follow at residues 43 to 119 (CNLR…TPDL) and 167 to 191 (LRLP…DSPL). Polar residues-rich tracts occupy residues 52–63 (DQPTTSSNSVKE) and 81–115 (RRQS…SNDP). Residues 192 to 232 (QTRMKGWQREYIKEVIKDSHYPTEEELRDIEQKCDLSRKQI) constitute a DNA-binding region (homeobox; atypical). The disordered stretch occupies residues 238-274 (KRLTNPNRKPRVNHHDEKRKEQEERDSLADPDDDMIN). Basic and acidic residues predominate over residues 250-265 (NHHDEKRKEQEERDSL).

As to expression, expressed widely, including gut, the amphid sheath glial cells, and head and tail neurons including AWC, ASE, and ASH. Expressed in AWC (ON) olfactory neuron but not AWC (OFF).

It localises to the nucleus. Functionally, transcriptional regulator which binds DNA consensus sequence 5'-CCTTAAC-3'. Plays a role in establishing and maintaining asymmetric cell fates in chemosensory AWC neurons during larval neuronal development. This is achieved by repressing the expression of multiple AWC (OFF) genes, including srsx-3 and hlh-11 in the AWC (ON) neuron. Activates expression of sox-2 in the AWC (ON) neuron. This is Transcription factor nsy-7 from Caenorhabditis elegans.